The sequence spans 159 residues: Large ribosomal subunit protein uL11 (159 aa).

The protein belongs to the universal ribosomal protein uL11 family. Part of the ribosomal stalk of the 50S ribosomal subunit. Interacts with L10 and the large rRNA to form the base of the stalk. L10 forms an elongated spine to which L12 dimers bind in a sequential fashion forming a multimeric L10(L12)X complex.

Its function is as follows. Forms part of the ribosomal stalk which helps the ribosome interact with GTP-bound translation factors. The polypeptide is Large ribosomal subunit protein uL11 (Methanococcus maripaludis (strain C5 / ATCC BAA-1333)).